We begin with the raw amino-acid sequence, 280 residues long: 2-dehydro-3-deoxyphosphooctonate aldolase (280 aa).

Belongs to the KdsA family.

It is found in the cytoplasm. The catalysed reaction is D-arabinose 5-phosphate + phosphoenolpyruvate + H2O = 3-deoxy-alpha-D-manno-2-octulosonate-8-phosphate + phosphate. It functions in the pathway carbohydrate biosynthesis; 3-deoxy-D-manno-octulosonate biosynthesis; 3-deoxy-D-manno-octulosonate from D-ribulose 5-phosphate: step 2/3. Its pathway is bacterial outer membrane biogenesis; lipopolysaccharide biosynthesis. This chain is 2-dehydro-3-deoxyphosphooctonate aldolase, found in Coxiella burnetii (strain CbuG_Q212) (Coxiella burnetii (strain Q212)).